We begin with the raw amino-acid sequence, 1164 residues long: MREEGGGSREKEGESPNPPSLTQSRQPASSWGWGEGSGEVRPPHAPSGWGARAQRSRDPGMPPRPPPRQAGGGLSREFGKLLPALSHSPLGGLGSGSGSVAPGQGRAGAMGSRTPGSPLHAVQLRRGARRRPRLLPLLPPLLLLLLPPPPRVGGFNLDAEAPAVLSGPPGSFFGFSVEFYRPGTDGVSVLVGAPKANTSQPGVLQGGAVYLCPWGTSPAQCTPIEFDSKGSRIFESSTSSSEGEEPVEYKSLQWFGATVRAHGSSILACAPLYSWRTEKEPQSDPVGTCYLSTGNFTQILEYAPCRSDFSQEAGQGYCQGGFSAEFTKTGRVVLGGPGSYFWQGQILSATQEQIAESYYPGYLINPVRGQLQTRQASSIYDDSYLGYSVAVGEFSGDDREDFVAGVPKGNLTYGYVTILNGSDIRSLYNFSGEQMASYFGYAVAATDINGDGLDDLLVGAPLLMERTADGRPQEVGRVYIYLQRLAGMEPTPTLTLTGQDEFGRFGSSLTPLGDLDQDGYNDVAIGAAFGGENRQGVVFIFPGGPGGLASKPSQVLLPLWAAGHTPDFFGSALRGGRDLDGNGYPDLIVGSFGVDKAVVYRGRPIVSASASLTIFPAMFNPEEHSCSLEGNPVTCINLSFCLNASGKHVPDSIGFTVELQLDWQKQKGGVRRALFLASRQATLTQTLLIQNGAREDCREMKIYLRNESEFRDKLSPIHIALNFSLDPQAPVDSHGLRPVLHYQSKSRIEDKAQILLDCGEDNICVPDLQLEVFGEQNHVYLGDKNSLNLTFHAQNVGEGGAYEAELRVTAPPEAEYSGLVRHPGNFSSLSCDYFAVNQSRLLVCDLGNPMKAGASLWGGLRFTVPHLRDTKKTIQFDFQILSKNLNNSQSDVVSFRLSVEAQAQVSLNGVSKPEAVLFPMSDWHPQDQPQEEGDVGPAVHHVYELINLGPSSISQGVLELSCPHALDGQQLLYVTRVTGLSNCTTSHPPNPEGLELDPEGSQHHRLQRRDVPGRSPASSGPQILKCPEAECFKLRCELGPLHRQESRSLQLHFRVWAKTFLQREHQPFSLQCEAVYEALKMPYKILPRQLPQKALQVATAVQWIKAEGSHGVPLWIIILAILIGLLLLGLLIYILYKLGFFKRSLPYGTAMEKAQLKPPATSDA.

Residues 1-14 (MREEGGGSREKEGE) are compositionally biased toward basic and acidic residues. The interval 1 to 119 (MREEGGGSRE…MGSRTPGSPL (119 aa)) is disordered. Positions 81–90 (LLPALSHSPL) are enriched in low complexity. One copy of the FG-GAP 1 repeat lies at 156–221 (NLDAEAPAVL…CPWGTSPAQC (66 aa)). Asn-197 carries N-linked (GlcNAc...) asparagine glycosylation. The cysteines at positions 212 and 221 are disulfide-linked. At Ser-240 the chain carries Phosphoserine. FG-GAP repeat units lie at residues 241–301 (SEGE…QILE), 306–358 (RSDF…AESY), 372–424 (QTRQ…GSDI), 425–490 (RSLY…GMEP), 491–550 (TPTL…GLAS), and 554–617 (QVLL…IFPA). Cys-269 and Cys-289 are oxidised to a cystine. Asn-295 is a glycosylation site (N-linked (GlcNAc...) asparagine). Cysteines 305 and 318 form a disulfide. A protein is bound by residues Gln-375 and Asp-382. Ca(2+)-binding residues include Glu-393, Ser-395, Asp-397, and Asp-401. Residues Asn-410, Asn-420, and Asn-429 are each glycosylated (N-linked (GlcNAc...) asparagine). Asp-447, Asn-449, Asp-451, Leu-453, Asp-455, Asp-514, Asp-516, Asp-518, Tyr-520, Asp-522, Asp-578, Asp-580, Asn-582, Tyr-584, and Asp-586 together coordinate Ca(2+). Cys-626 and Cys-635 are oxidised to a cystine. N-linked (GlcNAc...) asparagine glycosylation is found at Asn-637, Asn-643, Asn-706, and Asn-722. Cys-641 and Cys-697 are oxidised to a cystine. Cys-758 and Cys-764 form a disulfide bridge. Asn-788, Asn-825, Asn-837, Asn-886, and Asn-982 each carry an N-linked (GlcNAc...) asparagine glycan. A disulfide bond links Cys-831 and Cys-844. 3 disulfides stabilise this stretch: Cys-962/Cys-1072, Cys-983/Cys-1036, and Cys-1026/Cys-1031. Residues 983 to 1022 (CTTSHPPNPEGLELDPEGSQHHRLQRRDVPGRSPASSGPQ) form a disordered region. Residues 1114-1134 (LWIIILAILIGLLLLGLLIYI) form a helical membrane-spanning segment. Residues 1135–1164 (LYKLGFFKRSLPYGTAMEKAQLKPPATSDA) lie on the Cytoplasmic side of the membrane. The interaction with HPS5 stretch occupies residues 1136–1143 (YKLGFFKR). The GFFKR motif motif lies at 1139-1143 (GFFKR).

The protein belongs to the integrin alpha chain family. As to quaternary structure, heterodimer of an alpha and a beta subunit. The alpha subunit is composed of a heavy and a light chain linked by a disulfide bond. Alpha-5 associates with beta-1. Interacts with NISCH. Interacts with HPS5. Interacts with RAB21 and COMP. Interacts with CIB1. ITGA5:ITGB1 interacts with CCN3. ITGA5:ITGB1 interacts with FBN1. ITGA5:ITGB1 interacts with IL1B. ITGA5:ITGB1 interacts with ACE2. ITGA5:ITGB1 interacts with SELP. Interacts with ANGPT2. ITGA5:ITGB1 interacts with IGFBP2. ITGA5:ITGB1 interacts with IGFBP1. Proteolytic cleavage by PCSK5 mediates activation of the precursor.

The protein resides in the cell membrane. It is found in the cell junction. It localises to the focal adhesion. In terms of biological role, integrin alpha-5/beta-1 (ITGA5:ITGB1) is a receptor for fibronectin and fibrinogen. It recognizes the sequence R-G-D in its ligands. ITGA5:ITGB1 binds to PLA2G2A via a site (site 2) which is distinct from the classical ligand-binding site (site 1) and this induces integrin conformational changes and enhanced ligand binding to site 1. ITGA5:ITGB1 acts as a receptor for fibrillin-1 (FBN1) and mediates R-G-D-dependent cell adhesion to FBN1. ITGA5:ITGB1 acts as a receptor for fibronectin (FN1) and mediates R-G-D-dependent cell adhesion to FN1. ITGA5:ITGB1 is a receptor for IL1B and binding is essential for IL1B signaling. ITGA5:ITGB3 is a receptor for soluble CD40LG and is required for CD40/CD40LG signaling. This Bos taurus (Bovine) protein is Integrin alpha-5 (ITGA5).